Here is a 584-residue protein sequence, read N- to C-terminus: 2-succinyl-5-enolpyruvyl-6-hydroxy-3-cyclohexene-1-carboxylate synthase (584 aa).

The protein belongs to the TPP enzyme family. MenD subfamily. In terms of assembly, homodimer. Requires Mg(2+) as cofactor. It depends on Mn(2+) as a cofactor. Thiamine diphosphate is required as a cofactor.

The enzyme catalyses isochorismate + 2-oxoglutarate + H(+) = 5-enolpyruvoyl-6-hydroxy-2-succinyl-cyclohex-3-ene-1-carboxylate + CO2. The protein operates within quinol/quinone metabolism; 1,4-dihydroxy-2-naphthoate biosynthesis; 1,4-dihydroxy-2-naphthoate from chorismate: step 2/7. Its pathway is quinol/quinone metabolism; menaquinone biosynthesis. Catalyzes the thiamine diphosphate-dependent decarboxylation of 2-oxoglutarate and the subsequent addition of the resulting succinic semialdehyde-thiamine pyrophosphate anion to isochorismate to yield 2-succinyl-5-enolpyruvyl-6-hydroxy-3-cyclohexene-1-carboxylate (SEPHCHC). The polypeptide is 2-succinyl-5-enolpyruvyl-6-hydroxy-3-cyclohexene-1-carboxylate synthase (Bacillus thuringiensis (strain Al Hakam)).